The following is a 418-amino-acid chain: Serine hydroxymethyltransferase (418 aa).

Residues Leu-121 and 125–127 each bind (6S)-5,6,7,8-tetrahydrofolate; that span reads GHL. Lys-230 is subject to N6-(pyridoxal phosphate)lysine. 355 to 357 serves as a coordination point for (6S)-5,6,7,8-tetrahydrofolate; sequence SPF.

Belongs to the SHMT family. In terms of assembly, homodimer. Pyridoxal 5'-phosphate serves as cofactor.

It localises to the cytoplasm. The catalysed reaction is (6R)-5,10-methylene-5,6,7,8-tetrahydrofolate + glycine + H2O = (6S)-5,6,7,8-tetrahydrofolate + L-serine. The protein operates within one-carbon metabolism; tetrahydrofolate interconversion. It participates in amino-acid biosynthesis; glycine biosynthesis; glycine from L-serine: step 1/1. Functionally, catalyzes the reversible interconversion of serine and glycine with tetrahydrofolate (THF) serving as the one-carbon carrier. This reaction serves as the major source of one-carbon groups required for the biosynthesis of purines, thymidylate, methionine, and other important biomolecules. Also exhibits THF-independent aldolase activity toward beta-hydroxyamino acids, producing glycine and aldehydes, via a retro-aldol mechanism. This is Serine hydroxymethyltransferase from Methylococcus capsulatus (strain ATCC 33009 / NCIMB 11132 / Bath).